Consider the following 248-residue polypeptide: 4-hydroxy-tetrahydrodipicolinate reductase (248 aa).

Aspartate 28 is an NAD(+) binding site. Residue lysine 29 coordinates NADP(+). NAD(+)-binding positions include 78–80 (ATT) and 102–105 (SYNM). Histidine 134 functions as the Proton donor/acceptor in the catalytic mechanism. Histidine 135 is a (S)-2,3,4,5-tetrahydrodipicolinate binding site. Lysine 138 functions as the Proton donor in the catalytic mechanism. A (S)-2,3,4,5-tetrahydrodipicolinate-binding site is contributed by 144–145 (GT).

The protein belongs to the DapB family.

The protein resides in the cytoplasm. It catalyses the reaction (S)-2,3,4,5-tetrahydrodipicolinate + NAD(+) + H2O = (2S,4S)-4-hydroxy-2,3,4,5-tetrahydrodipicolinate + NADH + H(+). The catalysed reaction is (S)-2,3,4,5-tetrahydrodipicolinate + NADP(+) + H2O = (2S,4S)-4-hydroxy-2,3,4,5-tetrahydrodipicolinate + NADPH + H(+). It participates in amino-acid biosynthesis; L-lysine biosynthesis via DAP pathway; (S)-tetrahydrodipicolinate from L-aspartate: step 4/4. Functionally, catalyzes the conversion of 4-hydroxy-tetrahydrodipicolinate (HTPA) to tetrahydrodipicolinate. The chain is 4-hydroxy-tetrahydrodipicolinate reductase from Exiguobacterium sibiricum (strain DSM 17290 / CCUG 55495 / CIP 109462 / JCM 13490 / 255-15).